A 1324-amino-acid polypeptide reads, in one-letter code: Coiled-coil domain-containing protein 171 (1324 aa).

5 coiled-coil regions span residues 29–296 (KNET…RAAH), 325–393 (AEAV…RLQY), 453–521 (FSVV…KCAD), 599–712 (SELC…VREN), and 981–1145 (FTQR…KECV). Positions 1301–1312 (PHSLSSQSSPGV) are enriched in polar residues. A disordered region spans residues 1301–1324 (PHSLSSQSSPGVPTNAKRPSQIGL).

This is Coiled-coil domain-containing protein 171 (Ccdc171) from Mus musculus (Mouse).